Reading from the N-terminus, the 270-residue chain is NAD kinase (270 aa).

The Proton acceptor role is filled by Asp49. Residues 49–50 (DG), Arg54, 126–127 (NE), Arg152, Asp154, 165–170 (TAYNKS), Ala189, and Gln227 contribute to the NAD(+) site.

It belongs to the NAD kinase family. A divalent metal cation serves as cofactor.

The protein resides in the cytoplasm. The catalysed reaction is NAD(+) + ATP = ADP + NADP(+) + H(+). Involved in the regulation of the intracellular balance of NAD and NADP, and is a key enzyme in the biosynthesis of NADP. Catalyzes specifically the phosphorylation on 2'-hydroxyl of the adenosine moiety of NAD to yield NADP. The protein is NAD kinase of Lactococcus lactis subsp. cremoris (strain SK11).